A 57-amino-acid polypeptide reads, in one-letter code: Conotoxin Cal6.39 (57 aa).

The signal sequence occupies residues 1-18 (MSGTTVLLLTCLFLVTMA). 3 cysteine pairs are disulfide-bonded: C22–C36, C29–C46, and C35–C52.

As to expression, expressed by the venom duct.

It is found in the secreted. Probable neurotoxin. This chain is Conotoxin Cal6.39, found in Californiconus californicus (California cone).